We begin with the raw amino-acid sequence, 337 residues long: Methylthioribose-1-phosphate isomerase (337 aa).

Substrate-binding positions include 51–53 (RGA), Arg88, and Gln187. The active-site Proton donor is Asp228. A substrate-binding site is contributed by 238 to 239 (NK).

It belongs to the eIF-2B alpha/beta/delta subunits family. MtnA subfamily.

The enzyme catalyses 5-(methylsulfanyl)-alpha-D-ribose 1-phosphate = 5-(methylsulfanyl)-D-ribulose 1-phosphate. The protein operates within amino-acid biosynthesis; L-methionine biosynthesis via salvage pathway; L-methionine from S-methyl-5-thio-alpha-D-ribose 1-phosphate: step 1/6. Its function is as follows. Catalyzes the interconversion of methylthioribose-1-phosphate (MTR-1-P) into methylthioribulose-1-phosphate (MTRu-1-P). In Anaeromyxobacter sp. (strain Fw109-5), this protein is Methylthioribose-1-phosphate isomerase.